The following is a 342-amino-acid chain: MLGFSSLRRYLSSFTTRPLRRIESAKQLAKTMTVLPNTYDEPVRIAVIGGTGLRELPGFTQVASLSITTPWGSPSSPITILHHQCSHNNKTVAVAFLSRHGTHHQIAPHEVPARANIAALRSIGVRTIIAFSAVGSLQEEIKPRDFVIPDQVIDRTKGVRPWTFFEGGVVAHVPFGDPFDEGVAKVVRACGHSLEGEGVVLHDRGTLICMEGPQFSTRAESNLYRSWGGSVINMSCLPEAKLAREAEIAYQMICMSTDYDCWHESTADVTVEMVMGHMKANAQNARRFVTAVLDALASDEHADLVQAKHVEGSIKFGLSTAQANWSPEARAKLEWLFPGYWN.

Phosphate is bound by residues threonine 51, arginine 99–histidine 100, and serine 132–alanine 133. Methionine 234 serves as a coordination point for substrate. Serine 235 serves as a coordination point for phosphate. Aspartate 258–aspartate 260 is a substrate binding site.

The protein belongs to the PNP/MTAP phosphorylase family. MTAP subfamily. As to quaternary structure, homotrimer.

It localises to the cytoplasm. The protein localises to the nucleus. It carries out the reaction S-methyl-5'-thioadenosine + phosphate = 5-(methylsulfanyl)-alpha-D-ribose 1-phosphate + adenine. It participates in amino-acid biosynthesis; L-methionine biosynthesis via salvage pathway; S-methyl-5-thio-alpha-D-ribose 1-phosphate from S-methyl-5'-thioadenosine (phosphorylase route): step 1/1. Catalyzes the reversible phosphorylation of S-methyl-5'-thioadenosine (MTA) to adenine and 5-methylthioribose-1-phosphate. Involved in the breakdown of MTA, a major by-product of polyamine biosynthesis. Responsible for the first step in the methionine salvage pathway after MTA has been generated from S-adenosylmethionine. Has broad substrate specificity with 6-aminopurine nucleosides as preferred substrates. In Aspergillus fumigatus (strain ATCC MYA-4609 / CBS 101355 / FGSC A1100 / Af293) (Neosartorya fumigata), this protein is S-methyl-5'-thioadenosine phosphorylase.